Here is a 202-residue protein sequence, read N- to C-terminus: MSRYRGPRVKIIRRLGALPGLTSKTLKSKSNYIDRSTPNKKVSQYRIRLEEKQKLRSHYGLAERQLLKYMRIARKAKGSTGQILLQLLEMRLDNTIFRLGMSPTIPGARQLVNHRHISINNDVVDIPSYNCEPGDIITIGNKQKSRFIITKNINSFQRLKIPSHLIFDSTQLRGSVNQMINREWINLKINELLVVEYYSRQV.

The S4 RNA-binding domain occupies 90 to 151 (MRLDNTIFRL…KQKSRFIITK (62 aa)).

This sequence belongs to the universal ribosomal protein uS4 family. In terms of assembly, part of the 30S ribosomal subunit. Contacts protein S5. The interaction surface between S4 and S5 is involved in control of translational fidelity.

The protein resides in the plastid. It is found in the chloroplast. In terms of biological role, one of the primary rRNA binding proteins, it binds directly to 16S rRNA where it nucleates assembly of the body of the 30S subunit. Its function is as follows. With S5 and S12 plays an important role in translational accuracy. The sequence is that of Small ribosomal subunit protein uS4c (rps4) from Plagiochila adianthoides (Liverwort).